The sequence spans 737 residues: Glycogen [starch] synthase, muscle (737 aa).

Serine 8 bears the Phosphoserine; by AMPK and PKA mark. Serine 11 carries the post-translational modification Phosphoserine. Lysine 39 serves as a coordination point for UDP. UDP-alpha-D-glucose-binding residues include histidine 205 and arginine 211. Residues histidine 291, glutamate 292, glutamine 294, histidine 297, and lysine 301 each coordinate alpha-D-glucose 6-phosphate. Position 331 (arginine 331) interacts with UDP. UDP-alpha-D-glucose is bound at residue arginine 331. Serine 412 carries the post-translational modification Phosphoserine. Histidine 501 is an alpha-D-glucose 6-phosphate binding site. 3 residues coordinate UDP-alpha-D-glucose: glutamate 510, tryptophan 512, and glycine 513. Threonine 515 is a UDP binding site. Positions 582 and 586 each coordinate alpha-D-glucose 6-phosphate. The disordered stretch occupies residues 634–737 (YRYPRPASVP…PTSSLGEERN (104 aa)). Serine 641, serine 645, serine 649, and serine 652 each carry phosphoserine. Serine 653 carries the post-translational modification Phosphoserine; by GSK3-alpha and GSK3-beta. Serine 657 is modified (phosphoserine; by CK2). Positions 658-681 (EDEEDPRNGPLEEDGERYDEDEEA) are enriched in acidic residues. Basic and acidic residues predominate over residues 682 to 695 (AKDRRNIRAPEWPR). A Phosphoserine modification is found at serine 698. Residues 698–714 (SCTSSTSGSKRNSVDTA) show a composition bias toward polar residues. At threonine 700 the chain carries Phosphothreonine. Position 710 is a phosphoserine (serine 710). Residues 715-737 (TSSSLSTPSEPLSPTSSLGEERN) are compositionally biased toward low complexity. Threonine 721 bears the Phosphothreonine mark. A phosphoserine mark is found at serine 727 and serine 731.

This sequence belongs to the glycosyltransferase 3 family. As to quaternary structure, part of the GYS1-GYG1 complex, a heterooctamer composed of a tetramer of GYS1 and 2 dimers of GYG1, where each GYS1 protomer binds to one GYG1 subunit (via GYG1 C-terminus); the GYS1 tetramer may dissociate from GYG1 dimers to continue glycogen polymerization on its own. In terms of processing, phosphorylation at Ser-8 by AMPK inactivates the enzyme activity. Primed phosphorylation at Ser-657 (site 5) by CSNK2A1 and CSNK2A2 is required for inhibitory phosphorylation at Ser-641 (site 3a), Ser-645 (site 3b), Ser-649 (site 3c) and Ser-653 (site 4) by GSK3A an GSK3B. Phosphorylated at Ser-641 by DYRK2, leading to inactivation. Phosphorylated at Ser-641 by PASK, leading to inactivation; phosphorylation by PASK is inhibited by glycogen. Dephosphorylation at Ser-641 and Ser-645 by PP1 activates the enzyme. As to expression, expressed in skeletal muscle and most other cell types where glycogen is present.

The catalysed reaction is [(1-&gt;4)-alpha-D-glucosyl](n) + UDP-alpha-D-glucose = [(1-&gt;4)-alpha-D-glucosyl](n+1) + UDP + H(+). Its pathway is glycan biosynthesis; glycogen biosynthesis. Its activity is regulated as follows. Allosteric activation by glucose-6-phosphate. Phosphorylation reduces enzyme activity by constraining a tense conformation of the tetramer through inter-subunit interaction. Phosphorylation reduces the activity towards UDP-glucose. When in the non-phosphorylated state, glycogen synthase does not require glucose-6-phosphate as an allosteric activator; when phosphorylated it does. Functionally, glycogen synthase participates in the glycogen biosynthetic process along with glycogenin and glycogen branching enzyme. Extends the primer composed of a few glucose units formed by glycogenin by adding new glucose units to it. In this context, glycogen synthase transfers the glycosyl residue from UDP-Glc to the non-reducing end of alpha-1,4-glucan. The chain is Glycogen [starch] synthase, muscle from Homo sapiens (Human).